The chain runs to 1462 residues: FYVE, RhoGEF and PH domain-containing protein 5 (1462 aa).

6 disordered regions span residues 37 to 323, 492 to 512, 592 to 613, 670 to 718, 746 to 777, and 851 to 887; these read GRLP…SAEE, YVPETVPEETGPEAGSSAPGI, SGSFSQRNHLPSSGTSTPSSMV, HVDV…ASES, EDRSRPPFLPLPLTKPRSISFPSADTSDYENI, and CPISSAAPKEDLTSDEEQRSSEEEDSASRDPSVTHKV. The segment covering 72 to 82 has biased composition (basic and acidic residues); the sequence is PLREDEPKDEG. Acidic residues-rich tracts occupy residues 95-106 and 137-151; these read SAEEEEEREEGG and EGTDLALEDEGEGCA. Over residues 161–177 the composition is skewed to basic and acidic residues; it reads SRSEEEEKLVQPHRECS. Acidic residues-rich tracts occupy residues 211–220 and 242–255; these read GEAEEDDEEG and MGQDAEDTSEEPPE. Polar residues predominate over residues 592–611; sequence SGSFSQRNHLPSSGTSTPSS. A compositionally biased stretch (low complexity) spans 676–685; that stretch reads SSSRSSSESS. Residues 858-887 are compositionally biased toward basic and acidic residues; that stretch reads PKEDLTSDEEQRSSEEEDSASRDPSVTHKV. One can recognise a DH domain in the interval 892–1084; it reads RALVIAQELL…SKVTDRANDS (193 aa). The 95-residue stretch at 1113-1207 folds into the PH 1 domain; the sequence is EFLKEGTLMK…WYGCLSRALP (95 aa). The FYVE-type zinc-finger motif lies at 1242–1301; the sequence is VTHVMMCMNCGCDFSLTLRRHHCHACGKIVCRNCSRNKYPLKYLKDRMAKVCDGCFGELK. Zn(2+) contacts are provided by Cys1248, Cys1251, Cys1264, Cys1267, Cys1272, Cys1275, Cys1293, and Cys1296. A PH 2 domain is found at 1363-1461; sequence GSAISGYLSR…WIEAMEDASV (99 aa).

Expressed in endothelial cells (at protein level).

It localises to the cytoplasm. The protein resides in the cytoskeleton. Its subcellular location is the cell projection. The protein localises to the ruffle membrane. It is found in the endoplasmic reticulum. It localises to the golgi apparatus. The protein resides in the early endosome. Functionally, activates CDC42, a member of the Ras-like family of Rho- and Rac proteins, by exchanging bound GDP for free GTP. Mediates VEGF-induced CDC42 activation. May regulate proangiogenic action of VEGF in vascular endothelial cells, including network formation, directional movement and proliferation. May play a role in regulating the actin cytoskeleton and cell shape. The polypeptide is FYVE, RhoGEF and PH domain-containing protein 5 (FGD5) (Homo sapiens (Human)).